The primary structure comprises 144 residues: Large ribosomal subunit protein uL15 (144 aa).

A disordered region spans residues 1–53; it reads MRLNTLSPAVGAKSAPKRVGRGIGSGLGKTAGRGHKGQKSRSGGGVRPGFEGG. 2 stretches are compositionally biased toward gly residues: residues 21–31 and 42–52; these read RGIGSGLGKTA and SGGGVRPGFEG.

It belongs to the universal ribosomal protein uL15 family. In terms of assembly, part of the 50S ribosomal subunit.

Functionally, binds to the 23S rRNA. The protein is Large ribosomal subunit protein uL15 of Shewanella amazonensis (strain ATCC BAA-1098 / SB2B).